The following is a 238-amino-acid chain: Membrane protein 2 (238 aa).

Belongs to the varicellovirus ORF2 protein family. In terms of processing, phosphorylated by host.

It is found in the host membrane. The polypeptide is Membrane protein 2 (Varicella-zoster virus (strain Dumas) (HHV-3)).